The primary structure comprises 104 residues: Pyrimidine/purine nucleoside phosphorylase (104 aa).

The protein belongs to the nucleoside phosphorylase PpnP family.

It catalyses the reaction a purine D-ribonucleoside + phosphate = a purine nucleobase + alpha-D-ribose 1-phosphate. The enzyme catalyses adenosine + phosphate = alpha-D-ribose 1-phosphate + adenine. The catalysed reaction is cytidine + phosphate = cytosine + alpha-D-ribose 1-phosphate. It carries out the reaction guanosine + phosphate = alpha-D-ribose 1-phosphate + guanine. It catalyses the reaction inosine + phosphate = alpha-D-ribose 1-phosphate + hypoxanthine. The enzyme catalyses thymidine + phosphate = 2-deoxy-alpha-D-ribose 1-phosphate + thymine. The catalysed reaction is uridine + phosphate = alpha-D-ribose 1-phosphate + uracil. It carries out the reaction xanthosine + phosphate = alpha-D-ribose 1-phosphate + xanthine. Catalyzes the phosphorolysis of diverse nucleosides, yielding D-ribose 1-phosphate and the respective free bases. Can use uridine, adenosine, guanosine, cytidine, thymidine, inosine and xanthosine as substrates. Also catalyzes the reverse reactions. This is Pyrimidine/purine nucleoside phosphorylase from Geobacter metallireducens (strain ATCC 53774 / DSM 7210 / GS-15).